Consider the following 314-residue polypeptide: Olfactory receptor 5P68 (314 aa).

The Extracellular portion of the chain corresponds to 1-28; that stretch reads MAFLHNGNHTAVTEFILLGLTDDPVFRV. The N-linked (GlcNAc...) asparagine glycan is linked to N8. A helical membrane pass occupies residues 29–49; sequence ILFTIILCIYLVTVSGNLSTI. Residues 50 to 57 are Cytoplasmic-facing; the sequence is LLIRVSSQ. A helical membrane pass occupies residues 58 to 78; sequence LHHPMYFFLSHLASVDIGYSS. At 79 to 102 the chain is on the extracellular side; sequence SVTPNMLANFLVEKNTISYLGCTI. C100 and C192 are oxidised to a cystine. The helical transmembrane segment at 103–123 threads the bilayer; sequence QLSLAAFCGTVECFLLATMAY. At 124–136 the chain is on the cytoplasmic side; the sequence is DRFMAICSPLLYS. The chain crosses the membrane as a helical span at residues 137-157; the sequence is TKMSTQVCIQLIVGSYIGGFL. The Extracellular portion of the chain corresponds to 158–199; the sequence is NASSFTLFFLSFLFCGPNRINHFYCDFAPLVALSCSDVSVSE. The helical transmembrane segment at 200–220 threads the bilayer; it reads VVTSFFSGSVTMITMLVIAIS. The Cytoplasmic portion of the chain corresponds to 221–240; that stretch reads YTYILITILKMRSTEGRHKA. A helical membrane pass occupies residues 241–261; that stretch reads FSTCTSHLTAVTLFYGTITFI. Topologically, residues 262–274 are extracellular; the sequence is YVMPKSSFSTDQN. A helical transmembrane segment spans residues 275-295; sequence KVVSVFYMVVIPMLNPLIYSL. At 296–314 the chain is on the cytoplasmic side; sequence RNNEIKDALKRHLGKKIFS.

It belongs to the G-protein coupled receptor 1 family.

It localises to the cell membrane. Its function is as follows. Potential odorant receptor. This chain is Olfactory receptor 5P68, found in Mus musculus (Mouse).